Consider the following 446-residue polypeptide: Palmitoyltransferase PFA4 (446 aa).

The Cytoplasmic segment spans residues 1–8 (MAVQLKWP). A helical membrane pass occupies residues 9–29 (ILGVIIPCIIIFSLSYGSHYF). The Lumenal portion of the chain corresponds to 30-40 (ILRHHLTMKQQ). A helical transmembrane segment spans residues 41–61 (LIYEFYVTMIWISYLLAIYTN). Residues 62 to 161 (PGRVPKNYKP…GNNNLPHFMR (100 aa)) are Cytoplasmic-facing. The DHHC domain occupies 114-164 (RYCKKCNNYKPPRSHHCKICQQCVLQMDHHCPWTLNCVGNNNLPHFMRFLG). Residue cysteine 144 is the S-palmitoyl cysteine intermediate of the active site. Residues 162–182 (FLGWIIWGTGYLMIQLIKLII) form a helical membrane-spanning segment. Residues 183–201 (NYYENSNMPHYLFNKTELV) are Lumenal-facing. Residues 202–222 (AIIAITPLNFFVFASILVLFI) traverse the membrane as a helical segment. The Cytoplasmic portion of the chain corresponds to 223-446 (RCLINICKGM…TDFGVDEDSD (224 aa)).

It belongs to the DHHC palmitoyltransferase family. PFA4 subfamily.

The protein resides in the endoplasmic reticulum membrane. The catalysed reaction is L-cysteinyl-[protein] + hexadecanoyl-CoA = S-hexadecanoyl-L-cysteinyl-[protein] + CoA. Its function is as follows. Mediates the reversible addition of palmitate to target proteins, thereby regulating their membrane association and biological function. The sequence is that of Palmitoyltransferase PFA4 from Candida albicans (strain SC5314 / ATCC MYA-2876) (Yeast).